A 226-amino-acid chain; its full sequence is 7-cyano-7-deazaguanine synthase (226 aa).

Residue Leu11–Leu21 participates in ATP binding. Cys191, Cys201, Cys204, and Cys207 together coordinate Zn(2+).

The protein belongs to the QueC family. Zn(2+) is required as a cofactor.

It carries out the reaction 7-carboxy-7-deazaguanine + NH4(+) + ATP = 7-cyano-7-deazaguanine + ADP + phosphate + H2O + H(+). Its pathway is purine metabolism; 7-cyano-7-deazaguanine biosynthesis. In terms of biological role, catalyzes the ATP-dependent conversion of 7-carboxy-7-deazaguanine (CDG) to 7-cyano-7-deazaguanine (preQ(0)). The sequence is that of 7-cyano-7-deazaguanine synthase from Aromatoleum aromaticum (strain DSM 19018 / LMG 30748 / EbN1) (Azoarcus sp. (strain EbN1)).